The primary structure comprises 144 residues: 3-dehydroquinate dehydratase (144 aa).

Residue Tyr22 is the Proton acceptor of the active site. Asn71, His77, and Asp84 together coordinate substrate. The active-site Proton donor is His97. Substrate-binding positions include 98 to 99 (IS) and Arg108.

The protein belongs to the type-II 3-dehydroquinase family. As to quaternary structure, homododecamer.

The catalysed reaction is 3-dehydroquinate = 3-dehydroshikimate + H2O. It functions in the pathway metabolic intermediate biosynthesis; chorismate biosynthesis; chorismate from D-erythrose 4-phosphate and phosphoenolpyruvate: step 3/7. In terms of biological role, catalyzes a trans-dehydration via an enolate intermediate. This is 3-dehydroquinate dehydratase (aroQ) from Thermotoga maritima (strain ATCC 43589 / DSM 3109 / JCM 10099 / NBRC 100826 / MSB8).